The primary structure comprises 200 residues: Ribonuclease HII (200 aa).

Residues L10–F200 form the RNase H type-2 domain. A divalent metal cation-binding residues include D16, E17, and D108.

It belongs to the RNase HII family. Mn(2+) is required as a cofactor. Requires Mg(2+) as cofactor.

The protein localises to the cytoplasm. It carries out the reaction Endonucleolytic cleavage to 5'-phosphomonoester.. In terms of biological role, endonuclease that specifically degrades the RNA of RNA-DNA hybrids. The chain is Ribonuclease HII from Bacteroides thetaiotaomicron (strain ATCC 29148 / DSM 2079 / JCM 5827 / CCUG 10774 / NCTC 10582 / VPI-5482 / E50).